The chain runs to 79 residues: uncharacterized protein (79 aa).

This is an uncharacterized protein from Bacillus subtilis (strain 168).